The chain runs to 589 residues: Transmembrane 9 superfamily member 3 (589 aa).

The N-terminal stretch at 1–28 (MRPLPGALGVAAAAALWLLLLLLPRTRA) is a signal peptide. The N-linked (GlcNAc...) asparagine glycan is linked to asparagine 174. The next 5 membrane-spanning stretches (helical) occupy residues 224–244 (FSIF…SMIL), 294–314 (LIGS…VAMI), 328–348 (AIFV…SLYA), 360–380 (FIGA…INFI), and 389–409 (AIPF…ILPL). Asparagine 419 carries N-linked (GlcNAc...) asparagine glycosylation. Helical transmembrane passes span 449-469 (IVCL…YFIF), 482-502 (GFMM…TIVC), 519-539 (FLSA…YYFF), and 551-571 (FYFG…GAIG).

The protein belongs to the nonaspanin (TM9SF) (TC 9.A.2) family.

It is found in the membrane. This is Transmembrane 9 superfamily member 3 (TM9SF3) from Homo sapiens (Human).